A 102-amino-acid polypeptide reads, in one-letter code: Small ribosomal subunit protein uS10 (102 aa).

It belongs to the universal ribosomal protein uS10 family. As to quaternary structure, part of the 30S ribosomal subunit.

Its function is as follows. Involved in the binding of tRNA to the ribosomes. This chain is Small ribosomal subunit protein uS10, found in Gluconacetobacter diazotrophicus (strain ATCC 49037 / DSM 5601 / CCUG 37298 / CIP 103539 / LMG 7603 / PAl5).